A 183-amino-acid chain; its full sequence is MHLLPELASHHAVSIPELLVSRDERQARQHVWLKRHPVPLVSFTVVAPGPIKDSEVTRRIFNHGVTALRALAAKQGWQIQEQAALVSASGPEGMLSIAAPARDLKLATIELEHSHPLGRLWDIDVLTPEGDILSRRDYSLPPRRCLLCEQSAAVCARGKTHQLTDLLNRMEALLNDVDACNVN.

Belongs to the CitX family.

It catalyses the reaction apo-[citrate lyase ACP] + 2'-(5''-triphospho-alpha-D-ribosyl)-3'-dephospho-CoA = holo-[citrate lyase ACP] + diphosphate. Functionally, transfers 2-(5''-triphosphoribosyl)-3'-dephosphocoenzyme-A on a serine residue to the apo-acyl carrier protein (gamma chain) of the citrate lyase to yield holo-acyl carrier protein. The polypeptide is Apo-citrate lyase phosphoribosyl-dephospho-CoA transferase (Escherichia coli (strain SMS-3-5 / SECEC)).